A 282-amino-acid chain; its full sequence is MTITAGIDIGTGAVKTVLFRVEGDKTEWLAKRNDRIRQRDPFKLAEEAYNGLLEEAGLKASDVDYVATTGEGESLAFHTGHFYSMTTHARGAVYLNPEARAVLDIGALHGRAIRNDERGKVETYKMTSQCASGSGQFLENIARYLGIAQDEIGSLSTQADNPEVVSSICAVLAETDVINMVSRGISAPNILKGIHISMAGRLAKLLKSVGARDGVVLCTGGLALDEGLLKTLNESIQEQKMAVVAYNHPDSPYAGAIGAALWGAFRHEKLARLGQQQVAEAA.

2 residues coordinate [4Fe-4S] cluster: cysteine 130 and cysteine 169.

As to quaternary structure, heterotetramer composed of A, B, C, and D subunits. [4Fe-4S] cluster is required as a cofactor.

It carries out the reaction cyclohexa-1,5-diene-1-carbonyl-CoA + oxidized 2[4Fe-4S]-[ferredoxin] + 2 ADP + 2 phosphate = reduced 2[4Fe-4S]-[ferredoxin] + benzoyl-CoA + 2 ATP + 2 H2O. The catalysed reaction is 3-hydroxybenzoyl-CoA + AH2 + 2 ATP + 2 H2O = 3-hydroxycyclohexa-1,5-diene-1-carbonyl-CoA + A + 2 ADP + 2 phosphate + 2 H(+). Catalyzes the anaerobic reduction of benzoyl-CoA and 3-hydroxybenzoyl-CoA to form cyclohexa-1,5-diene-1-carbonyl-CoA and 3-hydroxycyclohexa-1,5-diene-1-carbonyl-CoA, respectively. The enzyme also reduces other benzoyl-CoA analogs with small substituents at the aromatic ring. The chain is Benzoyl-CoA reductase subunit D (bcrD) from Thauera aromatica.